The following is a 157-amino-acid chain: Protein Smg homolog (157 aa).

Belongs to the Smg family.

This Xylella fastidiosa (strain M23) protein is Protein Smg homolog.